We begin with the raw amino-acid sequence, 118 residues long: NADH-quinone oxidoreductase subunit A (118 aa).

The next 3 helical transmembrane spans lie at 8–28 (IGIFLVAAISFPLIPLVLAFF), 64–84 (ALAFVIFDIEVIFLYPWAVAF), and 87–107 (VGLYGLIAATIFLLMLFAGLL).

It belongs to the complex I subunit 3 family. In terms of assembly, NDH-1 is composed of 14 different subunits. Subunits NuoA, H, J, K, L, M, N constitute the membrane sector of the complex.

Its subcellular location is the cell membrane. The enzyme catalyses a quinone + NADH + 5 H(+)(in) = a quinol + NAD(+) + 4 H(+)(out). In terms of biological role, NDH-1 shuttles electrons from NADH, via FMN and iron-sulfur (Fe-S) centers, to quinones in the respiratory chain. The immediate electron acceptor for the enzyme in this species is believed to be ubiquinone. Couples the redox reaction to proton translocation (for every two electrons transferred, four hydrogen ions are translocated across the cytoplasmic membrane), and thus conserves the redox energy in a proton gradient. The polypeptide is NADH-quinone oxidoreductase subunit A (Chloroflexus aurantiacus (strain ATCC 29366 / DSM 635 / J-10-fl)).